A 342-amino-acid polypeptide reads, in one-letter code: Foldase protein PrsA (342 aa).

Positions 1–20 are cleaved as a signal peptide; the sequence is MKKKLILAAAGAMAVFSLAA. C21 carries the N-palmitoyl cysteine lipid modification. The S-diacylglycerol cysteine moiety is linked to residue C21. The PpiC domain occupies 142–235; the sequence is HPEVEAQIIQ…QTYQTTYYVV (94 aa). The tract at residues 297 to 342 is disordered; it reads MQTESSSASSEKKESKSSDSKTSDTKTSDSEKATDSSSKTTESSSK. Residues 306–330 show a composition bias toward basic and acidic residues; the sequence is SEKKESKSSDSKTSDTKTSDSEKAT. The segment covering 331–342 has biased composition (low complexity); sequence DSSSKTTESSSK.

It belongs to the PrsA family.

The protein localises to the cell membrane. The enzyme catalyses [protein]-peptidylproline (omega=180) = [protein]-peptidylproline (omega=0). In terms of biological role, plays a major role in protein secretion by helping the post-translocational extracellular folding of several secreted proteins. This Enterococcus faecalis (strain ATCC 700802 / V583) protein is Foldase protein PrsA.